Consider the following 421-residue polypeptide: Enolase (421 aa).

Gln-165 contributes to the (2R)-2-phosphoglycerate binding site. Glu-207 acts as the Proton donor in catalysis. Residues Asp-244, Glu-285, and Asp-312 each coordinate Mg(2+). Residues Lys-337, Arg-366, Ser-367, and Lys-388 each coordinate (2R)-2-phosphoglycerate. Lys-337 (proton acceptor) is an active-site residue.

It belongs to the enolase family. The cofactor is Mg(2+).

Its subcellular location is the cytoplasm. The protein localises to the secreted. It localises to the cell surface. It carries out the reaction (2R)-2-phosphoglycerate = phosphoenolpyruvate + H2O. Its pathway is carbohydrate degradation; glycolysis; pyruvate from D-glyceraldehyde 3-phosphate: step 4/5. Catalyzes the reversible conversion of 2-phosphoglycerate (2-PG) into phosphoenolpyruvate (PEP). It is essential for the degradation of carbohydrates via glycolysis. In Ehrlichia chaffeensis (strain ATCC CRL-10679 / Arkansas), this protein is Enolase.